Here is a 491-residue protein sequence, read N- to C-terminus: Anthranilate synthase component 1 (491 aa).

Residues Ser-49 and 271 to 273 contribute to the L-tryptophan site; that span reads PYL. 306–307 is a chorismate binding site; it reads GT. Glu-333 contributes to the Mg(2+) binding site. Chorismate is bound by residues Tyr-421, Arg-441, 455 to 457, and Gly-457; that span reads GAG. Glu-470 is a binding site for Mg(2+).

It belongs to the anthranilate synthase component I family. Heterotetramer consisting of two non-identical subunits: a beta subunit (TrpG) and a large alpha subunit (TrpE). The cofactor is Mg(2+).

It catalyses the reaction chorismate + L-glutamine = anthranilate + pyruvate + L-glutamate + H(+). It functions in the pathway amino-acid biosynthesis; L-tryptophan biosynthesis; L-tryptophan from chorismate: step 1/5. Its activity is regulated as follows. Feedback inhibited by tryptophan. Part of a heterotetrameric complex that catalyzes the two-step biosynthesis of anthranilate, an intermediate in the biosynthesis of L-tryptophan. In the first step, the glutamine-binding beta subunit (TrpG) of anthranilate synthase (AS) provides the glutamine amidotransferase activity which generates ammonia as a substrate that, along with chorismate, is used in the second step, catalyzed by the large alpha subunit of AS (TrpE) to produce anthranilate. In the absence of TrpG, TrpE can synthesize anthranilate directly from chorismate and high concentrations of ammonia. In Neisseria meningitidis serogroup C / serotype 2a (strain ATCC 700532 / DSM 15464 / FAM18), this protein is Anthranilate synthase component 1 (trpE).